The primary structure comprises 174 residues: uncharacterized protein (174 aa).

Basic and acidic residues-rich tracts occupy residues 1–31 and 52–67; these read MDKH…GKEG and EPPR…ERRS. Positions 1–69 are disordered; it reads MDKHGVKTPL…GEGRERRSVS (69 aa).

This is an uncharacterized protein from Homo sapiens (Human).